Reading from the N-terminus, the 128-residue chain is Large ribosomal subunit protein bL12 (128 aa).

It belongs to the bacterial ribosomal protein bL12 family. Homodimer. Part of the ribosomal stalk of the 50S ribosomal subunit. Forms a multimeric L10(L12)X complex, where L10 forms an elongated spine to which 2 to 4 L12 dimers bind in a sequential fashion. Binds GTP-bound translation factors.

Forms part of the ribosomal stalk which helps the ribosome interact with GTP-bound translation factors. Is thus essential for accurate translation. In Sulfurihydrogenibium sp. (strain YO3AOP1), this protein is Large ribosomal subunit protein bL12.